The primary structure comprises 177 residues: CRIB domain-containing protein RIC8 (177 aa).

The CRIB domain maps to 17–30; the sequence is IGTPTDVKHVAHIG. Positions 72-89 are enriched in basic and acidic residues; that stretch reads STRSRDIPRLPKSSRERS. Positions 72-177 are disordered; that stretch reads STRSRDIPRL…SSTSDAGYLT (106 aa). Low complexity predominate over residues 158–171; that stretch reads GSQVESISDSSSTS.

In terms of biological role, functions as a downstream effector of Rho-related GTP binding proteins of the 'Rho of Plants' (ROPs) family. Participates in the propagation of ROP GTPase signals in specific cellular responses. The polypeptide is CRIB domain-containing protein RIC8 (RIC8) (Arabidopsis thaliana (Mouse-ear cress)).